Reading from the N-terminus, the 262-residue chain is Aminoglycoside (3'') (9) adenylyltransferase (262 aa).

It carries out the reaction streptomycin + ATP = 3''-O-adenylylstreptomycin + diphosphate. It catalyses the reaction spectinomycin + ATP = 9-O-adenylylspectinomycin + diphosphate. Mediates bacterial resistance to the antibiotics streptomycin and spectinomycin. In Klebsiella pneumoniae, this protein is Aminoglycoside (3'') (9) adenylyltransferase.